A 210-amino-acid polypeptide reads, in one-letter code: MKLKILLHSSTNTPSFDFEEQQLPGPSTPTYTELTQASPCGRGKSRESQPTSTTSPETSGLRVRRGRRQRKSGPGPGETPSKRRRGGGRGGGETRLESAPSPGEVGIRHRTVERQGLSRLGQLQAEARDPPMILLKGTANSLKCWRYRKQNSSNCGFLFMSTVWNWVGDVSENHSRMLIAFKSPGQRDSFVKHNLFPKLCTYTYGSLNSL.

The disordered stretch occupies residues 1–119; the sequence is MKLKILLHSS…RTVERQGLSR (119 aa). The segment covering 24 to 38 has biased composition (polar residues); the sequence is PGPSTPTYTELTQAS. Positions 48 to 61 are enriched in low complexity; the sequence is SQPTSTTSPETSGL. Basic residues predominate over residues 62–71; sequence RVRRGRRQRK.

It belongs to the papillomaviridae E8^E2C protein family.

The protein resides in the host nucleus. Functionally, plays a role in limiting the replication of viral DNA in keratinocytes. Recruits the host NCoR/SMRT complex to viral replication foci to mediate repression of both viral replication and transcription. In Human papillomavirus 65, this protein is Protein E8^E2C.